Here is a 1157-residue protein sequence, read N- to C-terminus: DNA-directed RNA polymerase subunit beta (1157 aa).

Belongs to the RNA polymerase beta chain family. The RNAP catalytic core consists of 2 alpha, 1 beta, 1 beta' and 1 omega subunit. When a sigma factor is associated with the core the holoenzyme is formed, which can initiate transcription.

The enzyme catalyses RNA(n) + a ribonucleoside 5'-triphosphate = RNA(n+1) + diphosphate. DNA-dependent RNA polymerase catalyzes the transcription of DNA into RNA using the four ribonucleoside triphosphates as substrates. This Tropheryma whipplei (Whipple's bacillus) protein is DNA-directed RNA polymerase subunit beta.